The chain runs to 293 residues: Ribosomal protein L11 methyltransferase (293 aa).

S-adenosyl-L-methionine is bound by residues threonine 145, glycine 166, aspartate 188, and asparagine 230.

The protein belongs to the methyltransferase superfamily. PrmA family.

The protein resides in the cytoplasm. It carries out the reaction L-lysyl-[protein] + 3 S-adenosyl-L-methionine = N(6),N(6),N(6)-trimethyl-L-lysyl-[protein] + 3 S-adenosyl-L-homocysteine + 3 H(+). Methylates ribosomal protein L11. This is Ribosomal protein L11 methyltransferase from Escherichia coli O7:K1 (strain IAI39 / ExPEC).